The sequence spans 757 residues: Zinc finger CCCH domain-containing protein 5 (757 aa).

The segment at 1-127 (MEQANEKEEE…REEEERRWKD (127 aa)) is disordered. The span at 13–35 (HEEAAGEKESFEESKEKAAEMSR) shows a compositional bias: basic and acidic residues. The span at 36–50 (KEKRKAMKKLKRKQV) shows a compositional bias: basic residues. Residues 51 to 127 (RKEIAAKERE…REEEERRWKD (77 aa)) show a composition bias toward basic and acidic residues. A C3H1-type 1 zinc finger spans residues 240–268 (EQDKAHCPFHLKTGACRFGQRCSRVHFYP). The 78-residue stretch at 295 to 372 (YTDEEAELCY…KQVNCEFVNI (78 aa)) folds into the RRM domain. The C3H1-type 2 zinc finger occupies 374 to 404 (RWKVAICGEYMKSRLKTCSRGSACNFIHCFR). The tract at residues 441–757 (HESSGSLNDS…EEEIERWRPV (317 aa)) is disordered. A compositionally biased stretch (polar residues) spans 444-455 (SGSLNDSISDLS). The span at 487–546 (YHGDTQDSTREDKLRRHAENCHDGDDSPSRDGSLEREMYKERRYAKDTLHRDSRWSEHSP) shows a compositional bias: basic and acidic residues. 2 stretches are compositionally biased toward basic residues: residues 547–557 (GHRVGRKRIHG) and 600–609 (KTHRSSRKHS). Basic and acidic residues-rich tracts occupy residues 610 to 634 (REGS…DKSH), 644 to 672 (RSSS…KRSV), and 681 to 721 (SDKD…ETHK). Residues 722 to 733 (ERRHRHRKRRRT) show a composition bias toward basic residues.

The protein is Zinc finger CCCH domain-containing protein 5 of Arabidopsis thaliana (Mouse-ear cress).